The primary structure comprises 427 residues: 3-phosphoshikimate 1-carboxyvinyltransferase (427 aa).

3-phosphoshikimate-binding residues include Lys22, Ser23, and Arg27. Lys22 provides a ligand contact to phosphoenolpyruvate. Residues Gly96 and Arg124 each coordinate phosphoenolpyruvate. Positions 169, 170, 171, 197, 313, 336, and 340 each coordinate 3-phosphoshikimate. Gln171 contributes to the phosphoenolpyruvate binding site. Asp313 (proton acceptor) is an active-site residue. Arg344, Arg386, and Lys411 together coordinate phosphoenolpyruvate.

This sequence belongs to the EPSP synthase family. As to quaternary structure, monomer.

It is found in the cytoplasm. The enzyme catalyses 3-phosphoshikimate + phosphoenolpyruvate = 5-O-(1-carboxyvinyl)-3-phosphoshikimate + phosphate. Its pathway is metabolic intermediate biosynthesis; chorismate biosynthesis; chorismate from D-erythrose 4-phosphate and phosphoenolpyruvate: step 6/7. In terms of biological role, catalyzes the transfer of the enolpyruvyl moiety of phosphoenolpyruvate (PEP) to the 5-hydroxyl of shikimate-3-phosphate (S3P) to produce enolpyruvyl shikimate-3-phosphate and inorganic phosphate. This is 3-phosphoshikimate 1-carboxyvinyltransferase from Enterobacter sp. (strain 638).